A 938-amino-acid chain; its full sequence is Isoleucine--tRNA ligase (938 aa).

Residues 58–68 (PYANGNIHIGH) carry the 'HIGH' region motif. Position 561 (glutamate 561) interacts with L-isoleucyl-5'-AMP. Positions 602 to 606 (KMSKS) match the 'KMSKS' region motif. Lysine 605 lines the ATP pocket. 4 residues coordinate Zn(2+): cysteine 901, cysteine 904, cysteine 921, and cysteine 924.

The protein belongs to the class-I aminoacyl-tRNA synthetase family. IleS type 1 subfamily. In terms of assembly, monomer. Zn(2+) is required as a cofactor.

Its subcellular location is the cytoplasm. It carries out the reaction tRNA(Ile) + L-isoleucine + ATP = L-isoleucyl-tRNA(Ile) + AMP + diphosphate. Catalyzes the attachment of isoleucine to tRNA(Ile). As IleRS can inadvertently accommodate and process structurally similar amino acids such as valine, to avoid such errors it has two additional distinct tRNA(Ile)-dependent editing activities. One activity is designated as 'pretransfer' editing and involves the hydrolysis of activated Val-AMP. The other activity is designated 'posttransfer' editing and involves deacylation of mischarged Val-tRNA(Ile). The polypeptide is Isoleucine--tRNA ligase (Yersinia pestis bv. Antiqua (strain Angola)).